A 1391-amino-acid chain; its full sequence is Leucine-rich PPR motif-containing protein, mitochondrial (1391 aa).

The transit peptide at Met-1 to Ala-42 directs the protein to the mitochondrion. PPR repeat units lie at residues Leu-110–Phe-144, Asp-145–Pro-179, Asn-180–Ile-214, Thr-215–Pro-249, Gly-250–Leu-284, Asn-389–Val-425, Ala-704–Ala-738, Asp-741–Leu-775, Thr-779–Lys-813, Thr-815–Pro-850, Arg-948–Pro-982, Pro-1028–Met-1062, Ser-1063–His-1093, Asn-1100–Pro-1134, and Arg-1310–Pro-1344. The tract at residues Lys-1118 to Tyr-1387 is RNA-binding.

It localises to the mitochondrion. Its subcellular location is the nucleus. May play a role in RNA metabolism in both nuclei and mitochondria. May bind mature mRNA in the nucleus outer membrane. In mitochondria binds to poly(A) mRNA. May be involved in transcription regulation. Binds single-stranded DNA. The polypeptide is Leucine-rich PPR motif-containing protein, mitochondrial (lrpprc) (Xenopus tropicalis (Western clawed frog)).